The chain runs to 356 residues: MTRPIQASLDLQALKQNLSIVRQAATHARVWSVVKANAYGHGIERIWSAIGATDGFALLNLEEAITLRERGWKGPILMLEGFFHAQDLEIYDQHRLTTCVHSNWQLKALQNARLKAPLDIYLKVNSGMNRLGFQPDRVLTVWQQLRAMANVGEMTLMSHFAEAEHPDGISGAMARIEQAAEGLECRRSLSNSAATLWHPEAHFDWVRPGIILYGASPSGQWRDIANTGLRPVMTLSSEIIGVQTLKAGERVGYGGRYTARDEQRIGIVAAGYADGYPRHAPTGTPVLVDGVRTMTVGTVSMDMLAVDLTPCPQAGIGTPVELWGKEIKIDDVAAAAGTVGYELMCALALRVPVVTV.

Catalysis depends on K35, which acts as the Proton acceptor; specific for D-alanine. At K35 the chain carries N6-(pyridoxal phosphate)lysine. R130 is a substrate binding site. Residue Y253 is the Proton acceptor; specific for L-alanine of the active site. M301 is a substrate binding site.

The protein belongs to the alanine racemase family. The cofactor is pyridoxal 5'-phosphate.

It catalyses the reaction L-alanine = D-alanine. Isomerizes L-alanine to D-alanine which is then oxidized to pyruvate by DadA. The sequence is that of Alanine racemase, catabolic (dadX) from Escherichia coli (strain K12).